The following is a 163-amino-acid chain: Small ribosomal subunit protein uS9 (163 aa).

The segment at 1 to 41 (MAENTNDSAVLETEEELTSYTTETNAGAGTGTSTIAPGYGT) is disordered. The span at 18–38 (TSYTTETNAGAGTGTSTIAPG) shows a compositional bias: low complexity.

This sequence belongs to the universal ribosomal protein uS9 family.

The chain is Small ribosomal subunit protein uS9 from Bifidobacterium adolescentis (strain ATCC 15703 / DSM 20083 / NCTC 11814 / E194a).